Consider the following 830-residue polypeptide: Vacuolar protein sorting-associated protein 11 homolog (830 aa).

An RING-type; atypical zinc finger spans residues 733–775 (CDICREMLSMQSIYFLCQHSFHEECLNYKSTKRQEKFLCIICK).

This sequence belongs to the VPS11 family. As to quaternary structure, part of the homotypic fusion and vacuole protein sorting (HOPS) complex, composed of Vps16A, car/Vps33A, dor/Vps18, Vps39, Vps11 and lt/Vps41. Unlike in other species, not part of the class C core vacuole/endosome tethering (CORVET) complex.

The protein localises to the late endosome membrane. It is found in the lysosome membrane. Functionally, part of the homotypic fusion and vacuole protein sorting (HOPS) tethering complex involved in endo-lysosomal vesicle trafficking and lysosome biogenesis, but unlike in many other species does not form part of the class C core vacuole/endosome tethering (CORVET) complex. The HOPS complex facilitates docking and fusion of lysosomes with late endosomes and several other types of vesicles. The HOPS complex is also involved in autophagy, pigment granule biogenesis and crinophagy (the elimination of unused secretory granules through fusion with lysosomes). The HOPS complex probably instigates autophagosome-lysosome fusion by binding autophagosome-associated Syx17/syntaxin 17 and promoting assembly of the trans-SNARE complex. Independent of Syx17/syntaxin 17, HOPS is involved in biosynthetic transport to lysosomes and lysosome-related organelles such as eye-pigment granules. Required for autophagocytosis-dependent remodeling of myofibrils and transverse-tubules (T-tubules) during metamorphosis. This is Vacuolar protein sorting-associated protein 11 homolog from Drosophila melanogaster (Fruit fly).